We begin with the raw amino-acid sequence, 183 residues long: uncharacterized protein (183 aa).

Transmembrane regions (helical) follow at residues 37-59 (LFGYISVGFLLFHPLLEVLPRQF), 79-98 (AILLGIAGWAVMLTLAVTSV), 110-132 (WRTFHGILAVVLITVVGYHVLVL), and 142-161 (AFYAVLLAGGYVTMIKTYVF).

It is found in the cell membrane. This is an uncharacterized protein from Archaeoglobus fulgidus (strain ATCC 49558 / DSM 4304 / JCM 9628 / NBRC 100126 / VC-16).